We begin with the raw amino-acid sequence, 991 residues long: Receptor-like protein kinase HAIKU2 (991 aa).

The N-terminal stretch at 1-19 (MLRLLFIVRLLFLMPLASS) is a signal peptide. Over 20-616 (RSNHSEEVEN…KRKHLSKVDM (597 aa)) the chain is Extracellular. Residue asparagine 22 is glycosylated (N-linked (GlcNAc...) asparagine). LRR repeat units follow at residues 66 to 90 (DGNVVEINLGSRSLINRDDDGRFTD), 99 to 123 (LKLLEKLVLGNNSLRGQIGTNLGKC), 125 to 148 (RLRYLDLGINNFSGEFPAIDSLQL), 150 to 170 (EFLSLNASGISGIFPWSSLKD), 171 to 196 (LKRLSFLSVGDNRFGSHPFPREILNL), 197 to 220 (TALQWVYLSNSSITGKIPEGIKNL), 221 to 244 (VRLQNLELSDNQISGEIPKEIVQL), 246 to 267 (NLRQLEIYSNDLTGKLPLGFRN), 269 to 291 (TNLRNFDASNNSLEGDLSELRFL), 292 to 314 (KNLVSLGMFENRLTGEIPKEFGD), 315 to 339 (FKSLAALSLYRNQLTGKLPRRLGSW), 341 to 363 (AFKYIDVSENFLEGQIPPYMCKK), 365 to 387 (VMTHLLMLQNRFTGQFPESYAKC), 388 to 411 (KTLIRLRVSNNSLSGMIPSGIWGL), 413 to 435 (NLQFLDLASNYFEGNLTGDIGNA), 436 to 459 (KSLGSLDLSNNRFSGSLPFQISGA), 461 to 482 (SLVSVNLRMNKFSGIVPESFGK), 483 to 508 (LKELSSLILDQNNLSGAIPKSLGLCT), 510 to 531 (LVDLNFAGNSLSEEIPESLGSL), 532 to 554 (KLLNSLNLSGNKLSGMIPVGLSA), and 555 to 578 (LKLSLLDLSNNQLTGSVPESLVSG). Residues asparagine 109, asparagine 135, asparagine 155, asparagine 195, and asparagine 206 are each glycosylated (N-linked (GlcNAc...) asparagine). 2 N-linked (GlcNAc...) asparagine glycosylation sites follow: asparagine 267 and asparagine 278. Residues asparagine 397 and asparagine 427 are each glycosylated (N-linked (GlcNAc...) asparagine). The N-linked (GlcNAc...) asparagine glycan is linked to asparagine 495. The N-linked (GlcNAc...) asparagine glycan is linked to asparagine 538. Residues 617–637 (CFIVAAILALFFLFSYVIFKI) traverse the membrane as a helical segment. The Cytoplasmic portion of the chain corresponds to 638–991 (RRDKLNKTVQ…SANDEITKVV (354 aa)). Residues 671-970 (IKSENIIGRG…SMLEKIEPSY (300 aa)) enclose the Protein kinase domain. Residues 677 to 685 (IGRGGQGNV) and lysine 699 contribute to the ATP site. A phosphotyrosine mark is found at tyrosine 762 and tyrosine 801. Aspartate 814 serves as the catalytic Proton acceptor. Tyrosine 859 and tyrosine 866 each carry phosphotyrosine. The residue at position 867 (threonine 867) is a Phosphothreonine. The segment at 972-991 (KNSGEASYGESANDEITKVV) is disordered.

The protein belongs to the protein kinase superfamily. Ser/Thr protein kinase family. Expressed in the endosperm of fertilized ovules.

It is found in the membrane. It carries out the reaction L-seryl-[protein] + ATP = O-phospho-L-seryl-[protein] + ADP + H(+). The catalysed reaction is L-threonyl-[protein] + ATP = O-phospho-L-threonyl-[protein] + ADP + H(+). Its function is as follows. Modulates the seed size by negatively regulating the cellularization of syncytial endosperm. The sequence is that of Receptor-like protein kinase HAIKU2 (IKU2) from Arabidopsis thaliana (Mouse-ear cress).